A 327-amino-acid polypeptide reads, in one-letter code: GTPase Obg (327 aa).

The Obg domain maps to 1-159 (MQFIDQANII…WEVQLELKLL (159 aa)). Positions 160–327 (AEVGIIGLPN…SLLSEVWKRI (168 aa)) constitute an OBG-type G domain. ATP contacts are provided by residues 166–173 (GLPNAGKS), 191–195 (FTTLI), 213–216 (DIPG), 280–283 (NKME), and 309–311 (SSS). 2 residues coordinate Mg(2+): serine 173 and threonine 193.

It belongs to the TRAFAC class OBG-HflX-like GTPase superfamily. OBG GTPase family. Monomer. Mg(2+) serves as cofactor.

It localises to the cytoplasm. Functionally, an essential GTPase which binds GTP, GDP and possibly (p)ppGpp with moderate affinity, with high nucleotide exchange rates and a fairly low GTP hydrolysis rate. Plays a role in control of the cell cycle, stress response, ribosome biogenesis and in those bacteria that undergo differentiation, in morphogenesis control. This is GTPase Obg from Prochlorococcus marinus (strain MIT 9215).